The primary structure comprises 4367 residues: Dynein heavy chain, cytoplasmic (4367 aa).

Over residues 1–13 the composition is skewed to pro residues; that stretch reads MMDSVPSPPPQPS. Residues 1-20 form a disordered region; the sequence is MMDSVPSPPPQPSPDANGVA. Positions 1–1904 are stem; sequence MMDSVPSPPP…HIKMANAKLN (1904 aa). Coiled coils occupy residues 676–693, 1176–1215, 1327–1351, 1557–1574, and 1637–1668; these read ARQI…VEQV, IKFA…EAVR, LTHF…KEAL, YKEF…LNRV, and NIPN…KERV. AAA regions lie at residues 1905-2130, 2202-2460, 2566-2815, and 2909-3179; these read YGFE…VLVS, EAIR…FTVA, EVNT…WVRG, and TFCE…QGKI. 1943–1950 is an ATP binding site; it reads GPAGTGKT. Residues 2195-2218 adopt a coiled-coil conformation; the sequence is ASLEKLQEAIRRLAAERQLVVNDI. ATP-binding positions include 2240 to 2247, 2605 to 2612, and 2947 to 2954; these read GNSGSGKS, GPPGSGKT, and GVSGSGKT. Coiled coils occupy residues 3193–3296, 3423–3481, and 3778–3809; these read QYVK…LARA, PLRE…SRVQ, and VIET…VEQI. Positions 3193–3481 are stalk; the sequence is QYVKLYNEKR…AIKAEMSRVQ (289 aa). AAA stretches follow at residues 3565-3794 and 4003-4215; these read LSTA…EISA and AERF…VIDT.

The protein belongs to the dynein heavy chain family. In terms of assembly, consists of at least two heavy chains and a number of intermediate and light chains.

It is found in the cytoplasm. The protein resides in the cytoskeleton. Cytoplasmic dynein acts as a motor for the intracellular retrograde motility of vesicles and organelles along microtubules. Dynein has ATPase activity; the force-producing power stroke is thought to occur on release of ADP. Required to maintain uniform nuclear distribution in hyphae. The sequence is that of Dynein heavy chain, cytoplasmic (ro-1) from Neurospora crassa (strain ATCC 24698 / 74-OR23-1A / CBS 708.71 / DSM 1257 / FGSC 987).